We begin with the raw amino-acid sequence, 236 residues long: Purine nucleoside phosphorylase CA_C1699 (236 aa).

The Zn(2+) site is built by histidine 62, cysteine 97, and histidine 114.

Belongs to the purine nucleoside phosphorylase YfiH/LACC1 family. As to quaternary structure, homodimer. Requires Cu(2+) as cofactor. The cofactor is Zn(2+).

It catalyses the reaction adenosine + phosphate = alpha-D-ribose 1-phosphate + adenine. The enzyme catalyses S-methyl-5'-thioadenosine + phosphate = 5-(methylsulfanyl)-alpha-D-ribose 1-phosphate + adenine. The catalysed reaction is inosine + phosphate = alpha-D-ribose 1-phosphate + hypoxanthine. It carries out the reaction adenosine + H2O + H(+) = inosine + NH4(+). Functionally, purine nucleoside enzyme that catalyzes the phosphorolysis of adenosine and inosine nucleosides, yielding D-ribose 1-phosphate and the respective free bases, adenine and hypoxanthine. Also catalyzes the phosphorolysis of S-methyl-5'-thioadenosine into adenine and S-methyl-5-thio-alpha-D-ribose 1-phosphate. Also has adenosine deaminase activity. The polypeptide is Purine nucleoside phosphorylase CA_C1699 (Clostridium acetobutylicum (strain ATCC 824 / DSM 792 / JCM 1419 / IAM 19013 / LMG 5710 / NBRC 13948 / NRRL B-527 / VKM B-1787 / 2291 / W)).